Here is a 718-residue protein sequence, read N- to C-terminus: Ribonuclease J (718 aa).

Residues 1 to 130 (MNDSRNRGRK…RGNRGGGRRN (130 aa)) form a disordered region. 2 stretches are compositionally biased toward low complexity: residues 55–91 (AAQG…NNNR) and 100–118 (SGNA…NRQG). Zn(2+) contacts are provided by histidine 220, histidine 222, aspartate 224, histidine 225, histidine 287, and aspartate 309. 510-514 (HTSGH) provides a ligand contact to substrate. Position 536 (histidine 536) interacts with Zn(2+).

This sequence belongs to the metallo-beta-lactamase superfamily. RNA-metabolizing metallo-beta-lactamase-like family. Bacterial RNase J subfamily. In terms of assembly, homodimer, may be a subunit of the RNA degradosome. It depends on Zn(2+) as a cofactor.

The protein resides in the cytoplasm. Its function is as follows. An RNase that has 5'-3' exonuclease and possibly endoonuclease activity. Involved in maturation of rRNA and in some organisms also mRNA maturation and/or decay. This chain is Ribonuclease J, found in Corynebacterium glutamicum (strain ATCC 13032 / DSM 20300 / JCM 1318 / BCRC 11384 / CCUG 27702 / LMG 3730 / NBRC 12168 / NCIMB 10025 / NRRL B-2784 / 534).